The primary structure comprises 173 residues: Large ribosomal subunit protein uL10 (173 aa).

This sequence belongs to the universal ribosomal protein uL10 family. Part of the ribosomal stalk of the 50S ribosomal subunit. The N-terminus interacts with L11 and the large rRNA to form the base of the stalk. The C-terminus forms an elongated spine to which L12 dimers bind in a sequential fashion forming a multimeric L10(L12)X complex.

Forms part of the ribosomal stalk, playing a central role in the interaction of the ribosome with GTP-bound translation factors. This Myxococcus xanthus (strain DK1622) protein is Large ribosomal subunit protein uL10.